The following is a 166-amino-acid chain: Small heat shock protein OV25-2 (166 aa).

The 112-residue stretch at 38–149 (LNECNIGNSL…ASRNIPIRAS (112 aa)) folds into the sHSP domain. The tract at residues 140–166 (ASRNIPIRASPKEPEANQKSAINDAKQ) is disordered.

This sequence belongs to the small heat shock protein (HSP20) family.

The chain is Small heat shock protein OV25-2 (OV25-2) from Onchocerca volvulus.